The chain runs to 890 residues: Leucine-rich repeat receptor-like tyrosine-protein kinase PXC3 (890 aa).

Positions 1–23 (MTFWCMSILLIVGFLSKSELCEA) are cleaved as a signal peptide. Residues 24-534 (QLSDEATLVA…LRYNHRVSYR (511 aa)) are Extracellular-facing. N-linked (GlcNAc...) asparagine glycosylation is found at asparagine 46, asparagine 61, asparagine 78, and asparagine 108. 18 LRR repeats span residues 67-85 (MLDL…ISDL), 86-108 (RSLK…SFGN), 110-132 (SELE…EFGK), 133-157 (LRGL…LKVL), 159-181 (RLEE…VGNL), 182-205 (SSLR…LGLV), 206-229 (SELE…IFEK), 231-254 (KLKV…GICS), 256-276 (LSSI…TIGN), 278-300 (SGLT…EFSK), 301-325 (CSNL…LGQL), 326-349 (INLQ…FLGS), 350-373 (GNLN…LCSM), 375-397 (RLQY…IGNC), 399-421 (KLLQ…IGRM), 422-446 (RNLQ…LGKL), 447-469 (DKLV…LLKG), and 471-492 (MSLI…VFVP). 3 N-linked (GlcNAc...) asparagine glycosylation sites follow: asparagine 140, asparagine 171, and asparagine 180. Asparagine 276, asparagine 289, and asparagine 303 each carry an N-linked (GlcNAc...) asparagine glycan. The N-linked (GlcNAc...) asparagine glycan is linked to asparagine 363. Asparagine 429 carries an N-linked (GlcNAc...) asparagine glycan. N-linked (GlcNAc...) asparagine glycans are attached at residues asparagine 477 and asparagine 498. The chain crosses the membrane as a helical span at residues 535 to 555 (IVLAVIGSGVAVFVSVTVVVL). The Cytoplasmic portion of the chain corresponds to 556–890 (LFMMREKQEK…EMLQEVKQIK (335 aa)). The Protein kinase domain maps to 608–886 (MKESNKLSTG…KKVVEMLQEV (279 aa)). Residues 614–622 (LSTGTFSSV) and lysine 636 contribute to the ATP site. The Proton acceptor role is filled by aspartate 735.

This sequence belongs to the protein kinase superfamily. Tyr protein kinase family. In terms of tissue distribution, expressed in the vascular strands of cotyledons, the shoot apex, hypocotyls, roots, leaves, stems and flowers.

The protein localises to the cell membrane. The enzyme catalyses L-tyrosyl-[protein] + ATP = O-phospho-L-tyrosyl-[protein] + ADP + H(+). Leucine-rich repeat receptor-like protein kinase that may play a role in vascular tissues development. This is Leucine-rich repeat receptor-like tyrosine-protein kinase PXC3 from Arabidopsis thaliana (Mouse-ear cress).